We begin with the raw amino-acid sequence, 228 residues long: Cytochrome P450 monooxygenase ataY (228 aa).

Cys216 is a heme binding site.

Belongs to the cytochrome P450 family. Requires heme as cofactor.

Its pathway is mycotoxin biosynthesis. In terms of biological role, cytochrome P450 monooxygenase; part of the gene cluster that mediates the biosynthesis of acetylaranotin, a member of the epipolythiodioxopiperazine (ETP) class of toxins characterized by a disulfide-bridged cyclic dipeptide. The first step of acetylaranotin biosynthesis is performed by the NRPS ataP which produces diketopiperazine cyclo-L-Phe-L-Phe via the condensation of 2 phenylalanines (L-Phe). The ataC domain of ataTC then catalyzes the formation of bishydroxylation of cyclo-L-Phe-L-Phe. The glutathione S-transferase domain ataG in ataIMG further catalyzes the conjugation of two glutathiones to the bishydroxylated intermediate. Next, the dipeptidase ataJ removes the Glu residues. The following step is performed by the carbon sulfur lyase domain ataI of ataIMG which may convert the bis-cysteinyl adduct to yield an epidithiol intermediate. The ataT domain from ataTC then catalyzes the oxidation of the free dithiols, followed by a cyclization step catalyzed by the cytochrome P450 ataF. AtaF probably acts as an epoxidase to promote a dual epoxidation formation at C8 and C9 along with C8' and C9', followed by the spontaneous nucleophilic attack of the amide nitrogens N10 and N10' to yield an intermediate with the pyrrolidine partial structure. The final steps of acetylaranotin biosynthesis involve the acetylation and ring rearrangement of an epitetrathiodiketopiperazine intermediate to produce acetylaranotin. AtaH probably catalyzes the acetylation of epitetrathiodiketopiperazine to produce a diacetate and ataY is responsible for the formation of the dihydrooxepin moiety that converts the diacetate intermediate to acetylaranotin via acetylapoaranotin. Both enzymes could function independently in the absence of the other. The acetylaranotin bis-thiomethyltransferase ataS located outside of acetylaranotin gene cluster is the main thiomethyltransferase responsible for converting acetylaranotin and its related intermediates to their methylated forms. This is Cytochrome P450 monooxygenase ataY from Aspergillus terreus (strain NIH 2624 / FGSC A1156).